The chain runs to 209 residues: Mitochondrial import inner membrane translocase subunit Tim23 (209 aa).

3 helical membrane-spanning segments follow: residues 73–93 (FELA…FGAL), 125–145 (ALWA…GVIV), and 180–200 (GGLA…WEHI).

The protein belongs to the Tim17/Tim22/Tim23 family. Component of the TIM23 complex at least composed of timm23, timm17 and timm50. The complex interacts with the timm44 component of the PAM complex.

It localises to the mitochondrion inner membrane. In terms of biological role, essential component of the TIM23 complex, a complex that mediates the translocation of transit peptide-containing proteins across the mitochondrial inner membrane. This chain is Mitochondrial import inner membrane translocase subunit Tim23 (timm23), found in Xenopus laevis (African clawed frog).